The following is a 737-amino-acid chain: Catalase-peroxidase (737 aa).

Positions 89-219 form a cross-link, tryptophyl-tyrosyl-methioninium (Trp-Tyr) (with M-245); it reads WHSAGTYRVF…LAASHMGLIY (131 aa). The active-site Proton acceptor is the His-90. The tryptophyl-tyrosyl-methioninium (Tyr-Met) (with W-89) cross-link spans 219-245; that stretch reads YVNPEGPNGNPDPKAAARDIRVTFGRM. His-260 contacts heme b.

This sequence belongs to the peroxidase family. Peroxidase/catalase subfamily. Homodimer or homotetramer. The cofactor is heme b. Post-translationally, formation of the three residue Trp-Tyr-Met cross-link is important for the catalase, but not the peroxidase activity of the enzyme.

It is found in the cytoplasm. It carries out the reaction H2O2 + AH2 = A + 2 H2O. The enzyme catalyses 2 H2O2 = O2 + 2 H2O. In terms of biological role, bifunctional enzyme with both catalase and broad-spectrum peroxidase activity. This chain is Catalase-peroxidase, found in Aspergillus terreus (strain NIH 2624 / FGSC A1156).